Here is a 439-residue protein sequence, read N- to C-terminus: Serine hydroxymethyltransferase (439 aa).

A disordered region spans residues 1 to 20 (MNAPHRDETTASHRDDGFFT). Residues leucine 136 and 140–142 (GHL) contribute to the (6S)-5,6,7,8-tetrahydrofolate site. Position 245 is an N6-(pyridoxal phosphate)lysine (lysine 245).

The protein belongs to the SHMT family. In terms of assembly, homodimer. The cofactor is pyridoxal 5'-phosphate.

The protein localises to the cytoplasm. It catalyses the reaction (6R)-5,10-methylene-5,6,7,8-tetrahydrofolate + glycine + H2O = (6S)-5,6,7,8-tetrahydrofolate + L-serine. Its pathway is one-carbon metabolism; tetrahydrofolate interconversion. It functions in the pathway amino-acid biosynthesis; glycine biosynthesis; glycine from L-serine: step 1/1. In terms of biological role, catalyzes the reversible interconversion of serine and glycine with tetrahydrofolate (THF) serving as the one-carbon carrier. This reaction serves as the major source of one-carbon groups required for the biosynthesis of purines, thymidylate, methionine, and other important biomolecules. Also exhibits THF-independent aldolase activity toward beta-hydroxyamino acids, producing glycine and aldehydes, via a retro-aldol mechanism. This Jannaschia sp. (strain CCS1) protein is Serine hydroxymethyltransferase.